The sequence spans 332 residues: Lipoyl synthase (332 aa).

[4Fe-4S] cluster is bound by residues Cys79, Cys84, Cys90, Cys105, Cys109, Cys112, and Ser319. Residues Phe91–Lys308 enclose the Radical SAM core domain.

Belongs to the radical SAM superfamily. Lipoyl synthase family. It depends on [4Fe-4S] cluster as a cofactor.

The protein resides in the cytoplasm. It carries out the reaction [[Fe-S] cluster scaffold protein carrying a second [4Fe-4S](2+) cluster] + N(6)-octanoyl-L-lysyl-[protein] + 2 oxidized [2Fe-2S]-[ferredoxin] + 2 S-adenosyl-L-methionine + 4 H(+) = [[Fe-S] cluster scaffold protein] + N(6)-[(R)-dihydrolipoyl]-L-lysyl-[protein] + 4 Fe(3+) + 2 hydrogen sulfide + 2 5'-deoxyadenosine + 2 L-methionine + 2 reduced [2Fe-2S]-[ferredoxin]. Its pathway is protein modification; protein lipoylation via endogenous pathway; protein N(6)-(lipoyl)lysine from octanoyl-[acyl-carrier-protein]: step 2/2. Catalyzes the radical-mediated insertion of two sulfur atoms into the C-6 and C-8 positions of the octanoyl moiety bound to the lipoyl domains of lipoate-dependent enzymes, thereby converting the octanoylated domains into lipoylated derivatives. The sequence is that of Lipoyl synthase from Hahella chejuensis (strain KCTC 2396).